A 185-amino-acid chain; its full sequence is dTTP/UTP pyrophosphatase (185 aa).

D64 (proton acceptor) is an active-site residue.

The protein belongs to the Maf family. YhdE subfamily. The cofactor is a divalent metal cation.

It is found in the cytoplasm. It catalyses the reaction dTTP + H2O = dTMP + diphosphate + H(+). The catalysed reaction is UTP + H2O = UMP + diphosphate + H(+). Nucleoside triphosphate pyrophosphatase that hydrolyzes dTTP and UTP. May have a dual role in cell division arrest and in preventing the incorporation of modified nucleotides into cellular nucleic acids. The chain is dTTP/UTP pyrophosphatase from Leptospira borgpetersenii serovar Hardjo-bovis (strain JB197).